The chain runs to 226 residues: PKHD-type hydroxylase PLES_48951 (226 aa).

The 101-residue stretch at 78–178 (KVFPPLFNCY…RYASFFWTQS (101 aa)) folds into the Fe2OG dioxygenase domain. Fe cation contacts are provided by His-96, Asp-98, and His-159. Residue Arg-169 coordinates 2-oxoglutarate.

It depends on Fe(2+) as a cofactor. The cofactor is L-ascorbate.

The chain is PKHD-type hydroxylase PLES_48951 from Pseudomonas aeruginosa (strain LESB58).